Reading from the N-terminus, the 437-residue chain is GTPase HflX (437 aa).

Residues 150–173 are disordered; sequence DRQGGGSGGGKGGGGAARGEGEKQ. Over residues 152–167 the composition is skewed to gly residues; the sequence is QGGGSGGGKGGGGAAR. In terms of domain architecture, Hflx-type G spans 212-382; the sequence is ATAAIVGYTN…ACVEMLESRV (171 aa). Residues 218 to 225, 243 to 247, 265 to 268, 331 to 334, and 360 to 362 contribute to the GTP site; these read GYTNAGKS, FATLD, DTVG, NKVD, and SVK. Mg(2+) is bound by residues serine 225 and threonine 245.

The protein belongs to the TRAFAC class OBG-HflX-like GTPase superfamily. HflX GTPase family. In terms of assembly, monomer. Associates with the 50S ribosomal subunit. The cofactor is Mg(2+).

The protein localises to the cytoplasm. GTPase that associates with the 50S ribosomal subunit and may have a role during protein synthesis or ribosome biogenesis. In Akkermansia muciniphila (strain ATCC BAA-835 / DSM 22959 / JCM 33894 / BCRC 81048 / CCUG 64013 / CIP 107961 / Muc), this protein is GTPase HflX.